Consider the following 603-residue polypeptide: Serine/threonine-protein kinase PLK1 (603 aa).

The segment at 1 to 35 is disordered; that stretch reads MSAAVTAGKLARAPADPGKAGVPGVAAPGAPAAAP. Serine 2 bears the N-acetylserine mark. Threonine 6 carries the phosphothreonine modification. Over residues 13–35 the composition is skewed to low complexity; that stretch reads APADPGKAGVPGVAAPGAPAAAP. Lysine 19 is covalently cross-linked (Glycyl lysine isopeptide (Lys-Gly) (interchain with G-Cter in ubiquitin)). The 253-residue stretch at 53 to 305 folds into the Protein kinase domain; that stretch reads YVRGRFLGKG…INELLNDEFF (253 aa). Residues 59-67 and lysine 82 each bind ATP; that span reads LGKGGFAKC. At serine 103 the chain carries Phosphoserine. Glutamate 131 contributes to the ATP binding site. Serine 137 is modified (phosphoserine). The active-site Proton acceptor is the aspartate 176. Residues 178–181 and aspartate 194 each bind ATP; that span reads KLGN. Residues 194–221 are activation loop; it reads DFGLATKVEYDGERKKTLCGTPNYIAPE. Threonine 210 is modified (phosphothreonine; by AURKA). Threonine 214 carries the phosphothreonine modification. A Phosphoserine; by autocatalysis modification is found at serine 269. Serine 335 carries the post-translational modification Phosphoserine. The short motif at 337-340 is the D-box that targets the protein for proteasomal degradation in anaphase element; that stretch reads RKPL. Lysine 338 participates in a covalent cross-link: Glycyl lysine isopeptide (Lys-Gly) (interchain with G-Cter in SUMO2). Residues 338–364 form a disordered region; that stretch reads KPLTVLNKGLENPLPERPREKEEPVVR. The span at 351–364 shows a compositional bias: basic and acidic residues; it reads LPERPREKEEPVVR. Phosphoserine occurs at positions 375 and 450. The region spanning 410 to 488 is the POLO box 1 domain; sequence WVSKWVDYSD…LKYFRNYMSE (79 aa). A Glycyl lysine isopeptide (Lys-Gly) (interchain with G-Cter in ubiquitin) cross-link involves residue lysine 492. The interval 493 to 507 is linker; the sequence is AGANITPREGDELAR. The residue at position 498 (threonine 498) is a Phosphothreonine. A POLO box 2 domain is found at 510-592; that stretch reads YLRTWFRTRS…ARTMVDKLLS (83 aa). The segment at 538 to 540 is important for interaction with phosphorylated proteins; that stretch reads HTK.

The protein belongs to the protein kinase superfamily. Ser/Thr protein kinase family. CDC5/Polo subfamily. In terms of assembly, interacts with CEP170. Interacts with EVI5. Interacts with FAM29A. Interacts with SLX4/BTBD12. Interacts with TTDN1. Interacts (via POLO-box domain) with the phosphorylated form of BUB1, CDC25C and CENPU. Interacts with KIF2A. Interacts with CYLD. Part of an astrin (SPAG5)-kinastrin (SKAP) complex containing KNSTRN, SPAG5, PLK1, DYNLL1 and SGO2. Interacts with BIRC6/bruce. Interacts with CDK1-phosphorylated FRY; this interaction occurs in mitotic cells, but not in interphase cells. FRY interaction facilitates AURKA-mediated PLK1 phosphorylation. Interacts with CDK1-phosphorylated DCTN6 during mitotic prometaphase; the interaction facilitates recruitment to kinetochores. Interacts with CEP68; the interaction phosphorylates CEP68. Interacts (via POLO-box domain) with DCTN1. Interacts with CEP20 in later G1, S, G2 and M phases of the cell cycle; this interaction recruits PLK1 to centrosomes, a step required for S phase progression. Interacts with KLHL22. Interacts (via POLO box domains) with NEDD9/HEF1 (via C-terminus). Interacts with FIRRM (via N-terminus region); required for maintaining, but not activating, PLK1 kinase activity. Interacts with FZR1. Interacts with SKA3; the interaction promotes the stability of PLK1; the interaction promotes the stability of PLK1. Interacts with the MTMR3:MTMR4 heterooligomer; brings CEP55 and PLK1 together during early mitosis, regulating the phosphorylation of CEP55 by PLK1 and its recruitment to the midbody where it can mediate cell abscission. Post-translationally, catalytic activity is enhanced by phosphorylation of Thr-210. Phosphorylation at Thr-210 is first detected on centrosomes in the G2 phase of the cell cycle, peaks in prometaphase and gradually disappears from centrosomes during anaphase. Dephosphorylation at Thr-210 at centrosomes is probably mediated by protein phosphatase 1C (PP1C), via interaction with PPP1R12A/MYPT1. Autophosphorylation and phosphorylation of Ser-137 may not be significant for the activation of PLK1 during mitosis, but may enhance catalytic activity during recovery after DNA damage checkpoint. Phosphorylated in vitro by STK10. In terms of processing, ubiquitinated by the anaphase promoting complex/cyclosome (APC/C) in anaphase and following DNA damage, leading to its degradation by the proteasome. Ubiquitination is mediated via its interaction with FZR1/CDH1. Ubiquitination and subsequent degradation prevents entry into mitosis and is essential to maintain an efficient G2 DNA damage checkpoint. Monoubiquitination at Lys-492 by the BCR(KLHL22) ubiquitin ligase complex does not lead to degradation: it promotes PLK1 dissociation from phosphoreceptor proteins and subsequent removal from kinetochores, allowing silencing of the spindle assembly checkpoint (SAC) and chromosome segregation. As to expression, placenta and colon.

It localises to the nucleus. Its subcellular location is the chromosome. The protein localises to the centromere. It is found in the kinetochore. The protein resides in the cytoplasm. It localises to the cytoskeleton. Its subcellular location is the microtubule organizing center. The protein localises to the centrosome. It is found in the spindle. The protein resides in the midbody. It carries out the reaction L-seryl-[protein] + ATP = O-phospho-L-seryl-[protein] + ADP + H(+). The enzyme catalyses L-threonyl-[protein] + ATP = O-phospho-L-threonyl-[protein] + ADP + H(+). Its activity is regulated as follows. Activated by phosphorylation of Thr-210 by AURKA; phosphorylation by AURKA is enhanced by BORA. Once activated, activity is stimulated by binding target proteins. Binding of target proteins has no effect on the non-activated kinase. Several inhibitors targeting PLKs are currently in development and are under investigation in a growing number of clinical trials, such as BI 2536, an ATP-competitive PLK1 inhibitor or BI 6727, a dihydropteridinone that specifically inhibits the catalytic activity of PLK1. Its function is as follows. Serine/threonine-protein kinase that performs several important functions throughout M phase of the cell cycle, including the regulation of centrosome maturation and spindle assembly, the removal of cohesins from chromosome arms, the inactivation of anaphase-promoting complex/cyclosome (APC/C) inhibitors, and the regulation of mitotic exit and cytokinesis. Polo-like kinase proteins act by binding and phosphorylating proteins that are already phosphorylated on a specific motif recognized by the POLO box domains. Phosphorylates BORA, BUB1B/BUBR1, CCNB1, CDC25C, CEP55, ECT2, ERCC6L, FBXO5/EMI1, FOXM1, KIF20A/MKLP2, CENPU, NEDD1, NINL, NPM1, NUDC, PKMYT1/MYT1, KIZ, MRE11, PPP1R12A/MYPT1, POLQ, PRC1, RACGAP1/CYK4, RAD51, RHNO1, SGO1, STAG2/SA2, TEX14, TOPORS, p73/TP73, TPT1, WEE1 and HNRNPU. Plays a key role in centrosome functions and the assembly of bipolar spindles by phosphorylating KIZ, NEDD1 and NINL. NEDD1 phosphorylation promotes subsequent targeting of the gamma-tubulin ring complex (gTuRC) to the centrosome, an important step for spindle formation. Phosphorylation of NINL component of the centrosome leads to NINL dissociation from other centrosomal proteins. Involved in mitosis exit and cytokinesis by phosphorylating CEP55, ECT2, KIF20A/MKLP2, CENPU, PRC1 and RACGAP1. Recruited at the central spindle by phosphorylating and docking PRC1 and KIF20A/MKLP2; creates its own docking sites on PRC1 and KIF20A/MKLP2 by mediating phosphorylation of sites subsequently recognized by the POLO box domains. Phosphorylates RACGAP1, thereby creating a docking site for the Rho GTP exchange factor ECT2 that is essential for the cleavage furrow formation. Promotes the central spindle recruitment of ECT2. Plays a central role in G2/M transition of mitotic cell cycle by phosphorylating CCNB1, CDC25C, FOXM1, CENPU, PKMYT1/MYT1, PPP1R12A/MYPT1 and WEE1. Part of a regulatory circuit that promotes the activation of CDK1 by phosphorylating the positive regulator CDC25C and inhibiting the negative regulators WEE1 and PKMYT1/MYT1. Also acts by mediating phosphorylation of cyclin-B1 (CCNB1) on centrosomes in prophase. Phosphorylates FOXM1, a key mitotic transcription regulator, leading to enhance FOXM1 transcriptional activity. Involved in kinetochore functions and sister chromatid cohesion by phosphorylating BUB1B/BUBR1, FBXO5/EMI1 and STAG2/SA2. PLK1 is high on non-attached kinetochores suggesting a role of PLK1 in kinetochore attachment or in spindle assembly checkpoint (SAC) regulation. Required for kinetochore localization of BUB1B. Regulates the dissociation of cohesin from chromosomes by phosphorylating cohesin subunits such as STAG2/SA2. Phosphorylates SGO1: required for spindle pole localization of isoform 3 of SGO1 and plays a role in regulating its centriole cohesion function. Mediates phosphorylation of FBXO5/EMI1, a negative regulator of the APC/C complex during prophase, leading to FBXO5/EMI1 ubiquitination and degradation by the proteasome. Acts as a negative regulator of p53 family members: phosphorylates TOPORS, leading to inhibit the sumoylation of p53/TP53 and simultaneously enhance the ubiquitination and subsequent degradation of p53/TP53. Phosphorylates the transactivation domain of the transcription factor p73/TP73, leading to inhibit p73/TP73-mediated transcriptional activation and pro-apoptotic functions. Phosphorylates BORA, and thereby promotes the degradation of BORA. Contributes to the regulation of AURKA function. Also required for recovery after DNA damage checkpoint and entry into mitosis. Phosphorylates MISP, leading to stabilization of cortical and astral microtubule attachments required for proper spindle positioning. Together with MEIKIN, acts as a regulator of kinetochore function during meiosis I: required both for mono-orientation of kinetochores on sister chromosomes and protection of centromeric cohesin from separase-mediated cleavage. Phosphorylates CEP68 and is required for its degradation. Regulates nuclear envelope breakdown during prophase by phosphorylating DCTN1 resulting in its localization in the nuclear envelope. Phosphorylates the heat shock transcription factor HSF1, promoting HSF1 nuclear translocation upon heat shock. Phosphorylates HSF1 also in the early mitotic period; this phosphorylation regulates HSF1 localization to the spindle pole, the recruitment of the SCF(BTRC) ubiquitin ligase complex induicing HSF1 degradation, and hence mitotic progression. Regulates mitotic progression by phosphorylating RIOK2. Through the phosphorylation of DZIP1 regulates the localization during mitosis of the BBSome, a ciliary protein complex involved in cilium biogenesis. Regulates DNA repair during mitosis by mediating phosphorylation of POLQ and RHNO1, thereby promoting POLQ recruitment to DNA damage sites. Phosphorylates ATXN10 which may play a role in the regulation of cytokinesis and may stimulate the proteasome-mediated degradation of ATXN10. The sequence is that of Serine/threonine-protein kinase PLK1 (PLK1) from Homo sapiens (Human).